Reading from the N-terminus, the 199-residue chain is dITP/XTP pyrophosphatase (199 aa).

8-13 (SGNAGK) provides a ligand contact to substrate. Aspartate 69 acts as the Proton acceptor in catalysis. Aspartate 69 is a Mg(2+) binding site. Substrate is bound by residues serine 70, 154-157 (FGYN), lysine 177, and 182-183 (HR).

This sequence belongs to the HAM1 NTPase family. As to quaternary structure, homodimer. Mg(2+) serves as cofactor.

It carries out the reaction XTP + H2O = XMP + diphosphate + H(+). The enzyme catalyses dITP + H2O = dIMP + diphosphate + H(+). It catalyses the reaction ITP + H2O = IMP + diphosphate + H(+). Pyrophosphatase that catalyzes the hydrolysis of nucleoside triphosphates to their monophosphate derivatives, with a high preference for the non-canonical purine nucleotides XTP (xanthosine triphosphate), dITP (deoxyinosine triphosphate) and ITP. Seems to function as a house-cleaning enzyme that removes non-canonical purine nucleotides from the nucleotide pool, thus preventing their incorporation into DNA/RNA and avoiding chromosomal lesions. The chain is dITP/XTP pyrophosphatase from Xanthomonas axonopodis pv. citri (strain 306).